The sequence spans 462 residues: Argininosuccinate lyase (462 aa).

This sequence belongs to the lyase 1 family. Argininosuccinate lyase subfamily.

Its subcellular location is the cytoplasm. It carries out the reaction 2-(N(omega)-L-arginino)succinate = fumarate + L-arginine. It participates in amino-acid biosynthesis; L-arginine biosynthesis; L-arginine from L-ornithine and carbamoyl phosphate: step 3/3. The sequence is that of Argininosuccinate lyase from Dechloromonas aromatica (strain RCB).